Reading from the N-terminus, the 367-residue chain is Outer membrane porin C (367 aa).

The signal sequence occupies residues 1-21 (MKVKVLSLLVPALLVAGAANA).

It belongs to the Gram-negative porin family. Homotrimer.

It is found in the cell outer membrane. In terms of biological role, forms pores that allow passive diffusion of small molecules across the outer membrane. This Escherichia coli O157:H7 protein is Outer membrane porin C (ompC).